Here is a 156-residue protein sequence, read N- to C-terminus: 6,7-dimethyl-8-ribityllumazine synthase (156 aa).

5-amino-6-(D-ribitylamino)uracil-binding positions include Phe-23, 57-59 (AYE), and 81-83 (AII). 86 to 87 (GT) serves as a coordination point for (2S)-2-hydroxy-3-oxobutyl phosphate. Residue His-89 is the Proton donor of the active site. A 5-amino-6-(D-ribitylamino)uracil-binding site is contributed by Phe-114. Arg-128 is a binding site for (2S)-2-hydroxy-3-oxobutyl phosphate.

Belongs to the DMRL synthase family.

It carries out the reaction (2S)-2-hydroxy-3-oxobutyl phosphate + 5-amino-6-(D-ribitylamino)uracil = 6,7-dimethyl-8-(1-D-ribityl)lumazine + phosphate + 2 H2O + H(+). The protein operates within cofactor biosynthesis; riboflavin biosynthesis; riboflavin from 2-hydroxy-3-oxobutyl phosphate and 5-amino-6-(D-ribitylamino)uracil: step 1/2. In terms of biological role, catalyzes the formation of 6,7-dimethyl-8-ribityllumazine by condensation of 5-amino-6-(D-ribitylamino)uracil with 3,4-dihydroxy-2-butanone 4-phosphate. This is the penultimate step in the biosynthesis of riboflavin. In Helicobacter pylori (strain G27), this protein is 6,7-dimethyl-8-ribityllumazine synthase.